The primary structure comprises 279 residues: NADPH-dependent 7-cyano-7-deazaguanine reductase (279 aa).

86 to 88 (IES) provides a ligand contact to substrate. 88 to 89 (SK) contacts NADPH. Cysteine 187 (thioimide intermediate) is an active-site residue. Aspartate 194 functions as the Proton donor in the catalytic mechanism. Residue 226–227 (HE) coordinates substrate. NADPH is bound at residue 255 to 256 (RG).

The protein belongs to the GTP cyclohydrolase I family. QueF type 2 subfamily. As to quaternary structure, homodimer.

The protein resides in the cytoplasm. The catalysed reaction is 7-aminomethyl-7-carbaguanine + 2 NADP(+) = 7-cyano-7-deazaguanine + 2 NADPH + 3 H(+). Its pathway is tRNA modification; tRNA-queuosine biosynthesis. Its function is as follows. Catalyzes the NADPH-dependent reduction of 7-cyano-7-deazaguanine (preQ0) to 7-aminomethyl-7-deazaguanine (preQ1). This Actinobacillus pleuropneumoniae serotype 3 (strain JL03) protein is NADPH-dependent 7-cyano-7-deazaguanine reductase.